The chain runs to 529 residues: Corneodesmosin (529 aa).

A signal peptide spans Met1–Ala32. 2 disordered regions span residues Phe38–Gly248 and Gly383–Gly492. Composition is skewed to low complexity over residues Gly58–Ser83, Gly90–Gly100, Gly111–Ala175, Pro189–Pro231, Ser392–Ser408, and Pro426–Gly441. Asn172 carries an N-linked (GlcNAc...) asparagine glycan. Residues Gly449–Leu467 show a composition bias toward polar residues.

As to expression, exclusively expressed in skin.

It localises to the secreted. In terms of biological role, important for the epidermal barrier integrity. The polypeptide is Corneodesmosin (CDSN) (Homo sapiens (Human)).